The chain runs to 322 residues: Sulfate adenylyltransferase subunit 2 (322 aa).

The protein belongs to the PAPS reductase family. CysD subfamily. In terms of assembly, heterodimer composed of CysD, the smaller subunit, and CysN.

The enzyme catalyses sulfate + ATP + H(+) = adenosine 5'-phosphosulfate + diphosphate. It participates in sulfur metabolism; hydrogen sulfide biosynthesis; sulfite from sulfate: step 1/3. Its function is as follows. With CysN forms the ATP sulfurylase (ATPS) that catalyzes the adenylation of sulfate producing adenosine 5'-phosphosulfate (APS) and diphosphate, the first enzymatic step in sulfur assimilation pathway. APS synthesis involves the formation of a high-energy phosphoric-sulfuric acid anhydride bond driven by GTP hydrolysis by CysN coupled to ATP hydrolysis by CysD. This chain is Sulfate adenylyltransferase subunit 2, found in Bradyrhizobium sp. (strain BTAi1 / ATCC BAA-1182).